A 435-amino-acid chain; its full sequence is MGSWIPKLLLLQLVLLLTKHADSSSIIKYLPGFEGPLPFELETGYIGVGDEDEDQMFYYFIKSESNPEEDPLLVWLSGGPGCSSFTGLVYENGPLGFKVEAYNGSIPTLVSTTYSWTKVANIIYLDQPVGAGFSYSRNPFADRPSDTGSAKLVNEFVRKWLAKHPDYFSNPFYVTGNSYSGKVIPAIVQEISNGNYICCKPQINLQGYVIGNPVAYYDHDKDSRIPFAHGVALISDELFESLKRSCGGSYSIVDPLNTECLKLIKDYHKCVSGIYQELILKPKCETTSPDCYTYRYLLSIYWANNEIVRRALKVVEGSKGKWERCDLSVRSNQDIKSSIPYHMNNSIKGYRSLVISGDHDMTIPFLGTQAWIRSLNYSITEKWRPWMILDQVAGYTKTYANKMTLATVKGGGHTLEYKPEENSILFKRWISGQPL.

Positions Met-1–Ser-23 are cleaved as a signal peptide. Cystine bridges form between Cys-82–Cys-325, Cys-246–Cys-260, and Cys-284–Cys-291. A glycan (N-linked (GlcNAc...) asparagine) is linked at Asn-103. Residue Ser-178 is part of the active site. Asn-344 carries N-linked (GlcNAc...) asparagine glycosylation. Asp-360 is a catalytic residue. N-linked (GlcNAc...) asparagine glycosylation is present at Asn-376. Residue His-413 is part of the active site.

This sequence belongs to the peptidase S10 family. Expressed in senescent leaves.

The protein resides in the secreted. Its function is as follows. Probable carboxypeptidase. This Arabidopsis thaliana (Mouse-ear cress) protein is Serine carboxypeptidase-like 14 (SCPL14).